The following is a 258-amino-acid chain: Global transcriptional regulator CodY (258 aa).

Residues 1 to 156 (MSSLLEKTRQ…SATIIGLEIL (156 aa)) are GAF domain. The H-T-H motif DNA-binding region spans 204 to 223 (ASKIADKVGITRSVIVNALR).

The protein belongs to the CodY family.

Its subcellular location is the cytoplasm. In terms of biological role, DNA-binding global transcriptional regulator which is involved in the adaptive response to starvation and acts by directly or indirectly controlling the expression of numerous genes in response to nutrient availability. During rapid exponential growth, CodY is highly active and represses genes whose products allow adaptation to nutrient depletion. The chain is Global transcriptional regulator CodY from Clostridium tetani (strain Massachusetts / E88).